The primary structure comprises 451 residues: MTLHVIETARVTPTDYSVINSANLHKLPLTFFDLPWLLFQPVKRVFFYELTESTRDHFHSIILPKLKDSLSLILRNYLPLTGHITWEPNEPKPSIIVSENGVVLVTIAESDADFSHLSGYGQRPLSELHALVPKLPVSDDSATAFSIQITLFPNQGFSIGVAAHHAVLDGKTSSTFIKAWAQICKQELQSMPENLTPSYDRSLIKYPTYLDEKMIELVRSLKEDQTNIRSLTSLPSSKLGDDVVLATLVLSRADIERLREQVKNVSPSLHLSTFVIAYAYAWTCFVKARGGNKDRSVSLLFVGDFRDRLDPKLPGTYFGNCMIPVGCYNRKAAEFMEEKGFVTAAEIISDLVKGLSSRKIETIADTFVEGFSFQSWSTQFGTIAGSTRLGVYEADFGWGRPVKVDIVSIDQGEAIAMAERRDESGGVEIGMCLKKTEMDSVVSFFNNGLHS.

Residue H165 is the Proton acceptor of the active site. The HXXXD motif signature appears at 165-169; it reads HAVLD. Residues H270 and 272-273 contribute to the malonyl-CoA site; that span reads ST. The active-site Proton acceptor is the D395. Residues 395 to 399 carry the DFGWG motif motif; it reads DFGWG.

This sequence belongs to the plant acyltransferase family. Phenolic glucoside malonyltransferase subfamily.

It catalyses the reaction a flavonol 7-O-beta-D-glucoside + malonyl-CoA = a flavonol 7-O-(6-O-malonyl-beta-D-glucoside) + CoA. In terms of biological role, malonyltransferase acting on xenobiotic glucosides. Has activity toward 2-Naphthol glucoside (2NAG), 1-Naphthol glucoside (1NAG), kaempferol 7-O-glucoside, hydroxycoumarin glucosides and phenol-glucosides, but not toward kaempferol 3-O-glucoside or daidzin. Prefers phenol glucosides rather than naphtol glucosides. In vivo, seems to be involved in the malonylation of 4-methylumbelliferone glucoside or 4-nitrophenyl glucoside while PMAT1 would be involved in the malonylation of 2-Naphthol glucoside. This chain is Phenolic glucoside malonyltransferase 2 (PMAT2), found in Arabidopsis thaliana (Mouse-ear cress).